The primary structure comprises 63 residues: Small ribosomal subunit protein eS17 (63 aa).

Belongs to the eukaryotic ribosomal protein eS17 family.

The chain is Small ribosomal subunit protein eS17 from Methanococcus maripaludis (strain C7 / ATCC BAA-1331).